Here is a 46-residue protein sequence, read N- to C-terminus: Apamin (46 aa).

The signal sequence occupies residues 1 to 27; sequence MISMLRCISLFLSVILITGYFVTPVMS. 2 cysteine pairs are disulfide-bonded: C28/C38 and C30/C42. Positions 40-41 are essential for toxin activity; it reads RR. H45 carries the histidine amide modification.

As to expression, expressed by the venom gland.

It is found in the secreted. Its function is as follows. Neurotoxin that blocks voltage-independent calcium-activated potassium channels (KCNN1=SK1, KCNN2=SK2, KCNN3=SK3). The protein is Apamin of Apis cerana cerana (Oriental honeybee).